Here is a 346-residue protein sequence, read N- to C-terminus: Haptoglobin (346 aa).

Residues 1–18 (MRALGAVVTLLLWGQLFA) form the signal peptide. A Sushi domain is found at 31-87 (DSCPKPPEIENGYVEHLVRYRCQHYRLRTEGDGVYTLNSEKQWVNTAAGERLPECEA). Disulfide bonds link Cys52/Cys85, Cys89/Cys206, Cys249/Cys280, and Cys291/Cys321. The 243-residue stretch at 102 to 344 (IIGGSLDAKG…FLDWIQETMA (243 aa)) folds into the Peptidase S1 domain. N-linked (GlcNAc...) asparagine glycosylation is found at Asn147 and Asn181. The interaction with CD163 stretch occupies residues 258–263 (VPEKEG).

It belongs to the peptidase S1 family. Tetramer of two alpha and two beta chains; disulfide-linked. The hemoglobin/haptoglobin complex is composed of a haptoglobin dimer bound to two hemoglobin alpha-beta dimers. Interacts with CD163. Interacts with ERGIC3. As to expression, expressed by the liver and secreted in plasma.

The protein resides in the secreted. As a result of hemolysis, hemoglobin is found to accumulate in the kidney and is secreted in the urine. Haptoglobin captures, and combines with free plasma hemoglobin to allow hepatic recycling of heme iron and to prevent kidney damage. Haptoglobin also acts as an antioxidant, has antibacterial activity and plays a role in modulating many aspects of the acute phase response. Hemoglobin/haptoglobin complexes are rapidly cleared by the macrophage CD163 scavenger receptor expressed on the surface of liver Kupfer cells through an endocytic lysosomal degradation pathway. This chain is Haptoglobin (HP), found in Mesocricetus auratus (Golden hamster).